Reading from the N-terminus, the 96-residue chain is uncharacterized protein (96 aa).

2 helical membrane passes run 27-47 and 50-70; these read LAFRISELFLIFSIPLFALLI and LSGVNRVLMFFILVYYISIVF.

The protein resides in the cell membrane. This is an uncharacterized protein from Haemophilus influenzae (strain ATCC 51907 / DSM 11121 / KW20 / Rd).